We begin with the raw amino-acid sequence, 94 residues long: Protein RnfH (94 aa).

The protein belongs to the UPF0125 (RnfH) family.

The protein is Protein RnfH of Serratia proteamaculans (strain 568).